The sequence spans 181 residues: MKNNSIRTVVATGIGAALFIIIGMFVNIPIFGNTSIQLQYAVQALFSVIFGPITGFFMGFIGHALKDGIQYGNISWAWVLASGITGLVIGLFGKKYDVTMGKFSVMSMIWFNLAQALGLLIAYGVVTPIGDKIQFAQAWSYLYAQSFVAGVANFITIAIGGTLLLAIYASSRTQSGSLTKD.

A run of 5 helical transmembrane segments spans residues 11 to 31, 45 to 65, 72 to 92, 109 to 129, and 147 to 167; these read ATGI…IPIF, LFSV…GHAL, GNIS…IGLF, IWFN…VTPI, and FVAG…LLAI.

Belongs to the UPF0397 family.

It is found in the cell membrane. This Streptococcus thermophilus (strain CNRZ 1066) protein is UPF0397 protein str0306.